Consider the following 214-residue polypeptide: ATP-dependent Clp protease proteolytic subunit (214 aa).

S113 serves as the catalytic Nucleophile. The active site involves H138.

This sequence belongs to the peptidase S14 family. In terms of assembly, fourteen ClpP subunits assemble into 2 heptameric rings which stack back to back to give a disk-like structure with a central cavity, resembling the structure of eukaryotic proteasomes.

The protein resides in the cytoplasm. The enzyme catalyses Hydrolysis of proteins to small peptides in the presence of ATP and magnesium. alpha-casein is the usual test substrate. In the absence of ATP, only oligopeptides shorter than five residues are hydrolyzed (such as succinyl-Leu-Tyr-|-NHMec, and Leu-Tyr-Leu-|-Tyr-Trp, in which cleavage of the -Tyr-|-Leu- and -Tyr-|-Trp bonds also occurs).. Functionally, cleaves peptides in various proteins in a process that requires ATP hydrolysis. Has a chymotrypsin-like activity. Plays a major role in the degradation of misfolded proteins. This chain is ATP-dependent Clp protease proteolytic subunit, found in Teredinibacter turnerae (strain ATCC 39867 / T7901).